The primary structure comprises 285 residues: MAKIKLKNRKALVVYNKTDFDKNKHFAQALVDELNKKKLVGHILLLDDETADHKHIKNVELIINRSRRIDFLTKHNFLNSFLINPQNIVLVANDKYETYRWLKQHKFLTVDTTIFDPKKIKTFPIVIKKRDSYGGEDVHLIQNAEEIKQLPIQNPNEWIVQPFLSIGKVEYRAYILFGKVLKTIRRTASGDDFRANYSQNAAVDLFKLKWYIKHKIKRIAKKLGHGYYAIDFFLNKYNRIVVNEIEDAAGARALTKMCPDLNLPRVIIKSSLTHFKHHLKRQMIP.

Residues 107–285 form the ATP-grasp domain; it reads FLTVDTTIFD…KHHLKRQMIP (179 aa).

This is an uncharacterized protein from Mycoplasma pneumoniae (strain ATCC 29342 / M129 / Subtype 1) (Mycoplasmoides pneumoniae).